The primary structure comprises 179 residues: Putative DUP240 protein DFP1 (179 aa).

2 helical membrane passes run 4–24 and 26–46; these read FLLF…SGVL and PAMV…IWSF.

The protein belongs to the DUP/COS family.

It is found in the membrane. This is Putative DUP240 protein DFP1 from Saccharomyces cerevisiae (strain ATCC 204508 / S288c) (Baker's yeast).